The primary structure comprises 478 residues: Transposon Ty1-H Gag polyprotein (478 aa).

Polar residues-rich tracts occupy residues Met-1 to Pro-10, Thr-48 to Ser-60, and Gln-127 to Phe-152. Disordered regions lie at residues Met-1–Pro-84, Pro-126–Met-174, and Gly-390–Tyr-478. Positions Thr-153–Thr-165 are enriched in low complexity. Residues Asn-337 to His-439 form an RNA-binding region. Residues Asn-440–Ser-456 are compositionally biased toward low complexity. Residues Lys-457–Asn-466 show a composition bias toward polar residues. The segment covering Asn-467–Tyr-478 has biased composition (basic and acidic residues).

As to quaternary structure, homotrimer.

It localises to the cytoplasm. Capsid protein (CA) is the structural component of the virus-like particle (VLP), forming the shell that encapsulates the retrotransposons dimeric RNA genome. The particles are assembled from trimer-clustered units and there are holes in the capsid shells that allow for the diffusion of macromolecules. CA also has nucleocapsid-like chaperone activity, promoting primer tRNA(i)-Met annealing to the multipartite primer-binding site (PBS), dimerization of Ty1 RNA and initiation of reverse transcription. The chain is Transposon Ty1-H Gag polyprotein (TY1A-H) from Saccharomyces cerevisiae (strain ATCC 204508 / S288c) (Baker's yeast).